Reading from the N-terminus, the 119-residue chain is Ribosome-binding factor A (119 aa).

The protein belongs to the RbfA family. As to quaternary structure, monomer. Binds 30S ribosomal subunits, but not 50S ribosomal subunits or 70S ribosomes.

The protein resides in the cytoplasm. One of several proteins that assist in the late maturation steps of the functional core of the 30S ribosomal subunit. Associates with free 30S ribosomal subunits (but not with 30S subunits that are part of 70S ribosomes or polysomes). Required for efficient processing of 16S rRNA. May interact with the 5'-terminal helix region of 16S rRNA. The sequence is that of Ribosome-binding factor A from Coxiella burnetii (strain CbuG_Q212) (Coxiella burnetii (strain Q212)).